A 1447-amino-acid polypeptide reads, in one-letter code: Sister chromatid cohesion protein PDS5 homolog B (1447 aa).

One copy of the HEAT repeat lies at 383 to 419; it reads LLVNDHLLNFVRERTLDKRWRVRKEAMMGLAQIYKKY. Lys-1136 carries the N6-acetyllysine modification. A compositionally biased stretch (polar residues) spans 1137-1155; sequence PLSSAGKQSQTKSSRMETV. Positions 1137 to 1447 are disordered; the sequence is PLSSAGKQSQ…RRRSSKRERR (311 aa). A phosphoserine mark is found at Ser-1140, Ser-1162, Ser-1166, Ser-1176, Ser-1182, and Ser-1191. The segment covering 1156–1167 has biased composition (low complexity); sequence SNASSSSNPSSP. Residues 1172 to 1184 show a composition bias toward basic and acidic residues; the sequence is GRLDSTEMDHSEN. Positions 1196–1214 are enriched in basic and acidic residues; the sequence is KKSDKREDSDLVRSELEKP. The residue at position 1221 (Ser-1221) is a Phosphoserine. A compositionally biased stretch (basic and acidic residues) spans 1225-1243; the sequence is PEEKLGMDDLSKLVQEQKP. Residues 1245 to 1254 show a composition bias toward basic residues; it reads GSQRGRKRGH. Residues 1247–1259 constitute a DNA-binding region (a.T hook 1); sequence QRGRKRGHAASES. Phosphoserine occurs at positions 1257 and 1259. Basic and acidic residues predominate over residues 1265–1274; the sequence is PEEKRHKEEL. A Phosphoserine modification is found at Ser-1283. The segment at residues 1287–1299 is a DNA-binding region (a.T hook 2); it reads KGKRGRPPKPLGG. Basic residues-rich tracts occupy residues 1309–1318 and 1341–1352; these read TSKKGNKKKP and KSKQQRTSKRAQ. Phosphoserine is present on residues Ser-1357 and Ser-1365. Over residues 1358-1371 the composition is skewed to polar residues; sequence PETSAVESTQSTPQ. Thr-1366 carries the phosphothreonine modification. At Ser-1368 the chain carries Phosphoserine. Residues Thr-1369 and Thr-1380 each carry the phosphothreonine modification. The a.T hook 3 DNA-binding region spans 1371–1383; that stretch reads QKGRGRPSKTPSP. The segment covering 1378–1387 has biased composition (low complexity); it reads SKTPSPSQPK. Phosphoserine occurs at positions 1382, 1416, and 1419. A compositionally biased stretch (acidic residues) spans 1422–1432; the sequence is TTQEGAEEEDI. Residues 1437 to 1447 are compositionally biased toward basic residues; the sequence is VRRRSSKRERR.

It belongs to the PDS5 family. Interacts with the cohesin complex. Interacts with RAD21; the interaction is direct. Interacts with WAPL (via FGF motifs) or CDCA5 (via the FGF motif); the interaction is direct, cohesin-dependent and competitive. Highly expressed in intact prostate with levels decreasing after castration. Expressed exclusively in prostate cells inhibited from proliferating by long-term androgen exposure.

It localises to the nucleus. Regulator of sister chromatid cohesion in mitosis which may stabilize cohesin complex association with chromatin. May couple sister chromatid cohesion during mitosis to DNA replication. Cohesion ensures that chromosome partitioning is accurate in both meiotic and mitotic cells and plays an important role in DNA repair. Plays a role in androgen-induced proliferative arrest in prostate cells. The protein is Sister chromatid cohesion protein PDS5 homolog B (Pds5b) of Rattus norvegicus (Rat).